The chain runs to 48 residues: Osteocalcin (48 aa).

The region spanning 1 to 46 (SFAVGSSYGAAPDPLEAQREVCELNPDCDELADHIGFQEAYRRFYG) is the Gla domain. Positions 16, 20, 23, and 29 each coordinate Ca(2+). 4-carboxyglutamate occurs at positions 16, 20, and 23. Cysteine 22 and cysteine 28 are disulfide-bonded.

This sequence belongs to the osteocalcin/matrix Gla protein family. In terms of processing, gamma-carboxyglutamate residues are formed by vitamin K dependent carboxylation by GGCX. These residues are essential for the binding of calcium.

The protein resides in the secreted. Its function is as follows. The carboxylated form is one of the main organic components of the bone matrix, which constitutes 1-2% of the total bone protein. The carboxylated form binds strongly to apatite and calcium. The chain is Osteocalcin (BGLAP) from Dromaius novaehollandiae (Emu).